Consider the following 274-residue polypeptide: MAIHLYKTSTPSTRNGAVDNQVKSNPRNNLIYGQRRCGKGRNARGIITARHRGGGHKRLYRKIDFRRNEKDIYGRIVTIEYDPNRNAYICLIHYGDGEKRYILHPRGAIIGDTIVSGTEVPIKMGNALPLTDMPLGTAIHNIEITLGKGGQLARAAGAVAKLIAKEGKSATLKLPSGEVRLISKNCSATVGQVGNVGVNQKSLGRAGSKRWLGKRPVVRGVVMNPVDHPHGGGEGRAPIGRKNPTTPWGYPALGKRSRKRNKYSDNFIIRRRSK.

2 disordered regions span residues 1-22 and 225-274; these read MAIHLYKTSTPSTRNGAVDNQV and PVDH…RRSK.

It belongs to the universal ribosomal protein uL2 family. As to quaternary structure, part of the 50S ribosomal subunit.

Its subcellular location is the plastid. The protein localises to the chloroplast. The polypeptide is Large ribosomal subunit protein uL2c (rpl2) (Silene latifolia (White campion)).